The chain runs to 405 residues: uncharacterized protein (405 aa).

A run of 12 helical transmembrane segments spans residues Ile-19–Val-39, Val-47–Leu-67, Ile-85–Leu-105, Ala-107–Gly-127, Gly-156–Trp-176, Gly-178–Ile-198, Gly-224–Phe-244, Gly-252–Pro-272, Val-283–Met-303, Ile-309–Ala-329, Thr-344–Met-364, and Trp-366–Leu-386.

Belongs to the major facilitator superfamily. YhhS family.

The protein resides in the cell inner membrane. This is an uncharacterized protein from Shigella flexneri.